The sequence spans 232 residues: Phosphatidylserine decarboxylase proenzyme (232 aa).

Catalysis depends on Ser-190, which acts as the Schiff-base intermediate with substrate; via pyruvic acid. A Pyruvic acid (Ser); by autocatalysis modification is found at Ser-190.

The protein belongs to the phosphatidylserine decarboxylase family. PSD-A subfamily. Heterodimer of a large membrane-associated beta subunit and a small pyruvoyl-containing alpha subunit. Requires pyruvate as cofactor. Is synthesized initially as an inactive proenzyme. Formation of the active enzyme involves a self-maturation process in which the active site pyruvoyl group is generated from an internal serine residue via an autocatalytic post-translational modification. Two non-identical subunits are generated from the proenzyme in this reaction, and the pyruvate is formed at the N-terminus of the alpha chain, which is derived from the carboxyl end of the proenzyme. The post-translation cleavage follows an unusual pathway, termed non-hydrolytic serinolysis, in which the side chain hydroxyl group of the serine supplies its oxygen atom to form the C-terminus of the beta chain, while the remainder of the serine residue undergoes an oxidative deamination to produce ammonia and the pyruvoyl prosthetic group on the alpha chain.

Its subcellular location is the cell membrane. It catalyses the reaction a 1,2-diacyl-sn-glycero-3-phospho-L-serine + H(+) = a 1,2-diacyl-sn-glycero-3-phosphoethanolamine + CO2. It functions in the pathway phospholipid metabolism; phosphatidylethanolamine biosynthesis; phosphatidylethanolamine from CDP-diacylglycerol: step 2/2. Catalyzes the formation of phosphatidylethanolamine (PtdEtn) from phosphatidylserine (PtdSer). This is Phosphatidylserine decarboxylase proenzyme from Rhizobium rhizogenes (strain K84 / ATCC BAA-868) (Agrobacterium radiobacter).